We begin with the raw amino-acid sequence, 157 residues long: MDYTIEHVLTRKIAGFHLVGPWEKTVPQGFEQLTLWVDNFHIQPQAWLAVYYDNPQQVAPEKLRADTVVEVPADFTLPENSVGVILTDLPGGQYAVARARVENHDFGTPWLAFFTRLHQDVRYQMAARPCFEIYLNDGKRDGYWEIDMYIPVQTSGE.

This sequence belongs to the DNA gyrase inhibitor family. In terms of assembly, interacts with DNA gyrase.

The protein resides in the cytoplasm. In terms of biological role, inhibits the supercoiling activity of DNA gyrase. Acts by inhibiting DNA gyrase at an early step, prior to (or at the step of) binding of DNA by the gyrase. It protects cells against toxins that target DNA gyrase, by inhibiting activity of these toxins and reducing the formation of lethal double-strand breaks in the cell. The sequence is that of DNA gyrase inhibitor from Cronobacter turicensis (strain DSM 18703 / CCUG 55852 / LMG 23827 / z3032).